The primary structure comprises 265 residues: SPbeta prophage-derived uncharacterized protein YomU (265 aa).

The interval 238 to 265 is disordered; the sequence is KADGTKGVVTSDEGTGSSQSSDLGGTTE. A compositionally biased stretch (polar residues) spans 249 to 265; it reads DEGTGSSQSSDLGGTTE.

This is SPbeta prophage-derived uncharacterized protein YomU (yomU) from Bacillus subtilis (strain 168).